The chain runs to 274 residues: Putative pyruvate, phosphate dikinase regulatory protein (274 aa).

Position 150–157 (glycine 150–threonine 157) interacts with ADP.

This sequence belongs to the pyruvate, phosphate/water dikinase regulatory protein family. PDRP subfamily.

It catalyses the reaction N(tele)-phospho-L-histidyl/L-threonyl-[pyruvate, phosphate dikinase] + ADP = N(tele)-phospho-L-histidyl/O-phospho-L-threonyl-[pyruvate, phosphate dikinase] + AMP + H(+). The enzyme catalyses N(tele)-phospho-L-histidyl/O-phospho-L-threonyl-[pyruvate, phosphate dikinase] + phosphate + H(+) = N(tele)-phospho-L-histidyl/L-threonyl-[pyruvate, phosphate dikinase] + diphosphate. Its function is as follows. Bifunctional serine/threonine kinase and phosphorylase involved in the regulation of the pyruvate, phosphate dikinase (PPDK) by catalyzing its phosphorylation/dephosphorylation. This chain is Putative pyruvate, phosphate dikinase regulatory protein, found in Rickettsia peacockii (strain Rustic).